A 226-amino-acid polypeptide reads, in one-letter code: MPDDLTPDLLIRAYANGVFPMGDDDTGIVRWHAPDPRAYLPLDAFHIPHNLRRRVRRREFSVTADRAFASVIEACADRARTWITPRIIRVYTELHERGYAHSVECWQEGDLAGGLYGVGLKGAFFGESMFYRVSNASKVALVHLVRQLRAGGFTLLDTQYSTEHLERFGVTTVPRPAFEQKLIRALDVSPDWWPLADAEAADLDTPVSEFSAAAPTLRGNESPPNG.

The protein belongs to the L/F-transferase family.

The protein localises to the cytoplasm. It carries out the reaction N-terminal L-lysyl-[protein] + L-leucyl-tRNA(Leu) = N-terminal L-leucyl-L-lysyl-[protein] + tRNA(Leu) + H(+). The enzyme catalyses N-terminal L-arginyl-[protein] + L-leucyl-tRNA(Leu) = N-terminal L-leucyl-L-arginyl-[protein] + tRNA(Leu) + H(+). It catalyses the reaction L-phenylalanyl-tRNA(Phe) + an N-terminal L-alpha-aminoacyl-[protein] = an N-terminal L-phenylalanyl-L-alpha-aminoacyl-[protein] + tRNA(Phe). Functionally, functions in the N-end rule pathway of protein degradation where it conjugates Leu, Phe and, less efficiently, Met from aminoacyl-tRNAs to the N-termini of proteins containing an N-terminal arginine or lysine. This Salinibacter ruber (strain DSM 13855 / M31) protein is Leucyl/phenylalanyl-tRNA--protein transferase.